The chain runs to 198 residues: Recombination protein RecR (198 aa).

The C4-type zinc-finger motif lies at 57–72; it reads CSVCGRLTDDDPCSIC. Residues 80–175 enclose the Toprim domain; sequence TTILVLEDSR…KVTRLARGLA (96 aa).

The protein belongs to the RecR family.

Its function is as follows. May play a role in DNA repair. It seems to be involved in an RecBC-independent recombinational process of DNA repair. It may act with RecF and RecO. This Streptococcus pneumoniae (strain Hungary19A-6) protein is Recombination protein RecR.